The chain runs to 310 residues: MQAPPPEHCPGVESEQAGLVSACAGCPNQSICSDPSKKLEDPGKALVAAAMKDVKHKLLILSGKGGVGKSTVTTLLTRYLARSYPDNNFGVLDIDICGPSQPRLLGALGENVHQSGSGWSPVGIDDNVCLMSIGFLLGSVDDAVIWRGPKKNGMIRQFLSEVDWGNLDLLLLDTPPGTSDEHLSVVSYLRDDNAPESLHAIIVTTPQEVALLDVRKEINFCKKQRIPILGVIENMSSFRCGHCGNSSEIFPAKTGGAAAMCIEMDVPLLGSLPLDPLVTRSCDAGEDITAMRNETTEALATICSKIMSSL.

Positions 9, 23, 26, and 32 each coordinate [4Fe-4S] cluster. Residue 63-70 (GKGGVGKS) participates in ATP binding. [4Fe-4S] cluster contacts are provided by C240 and C243.

It belongs to the Mrp/NBP35 ATP-binding proteins family. NUBP1/NBP35 subfamily. In terms of assembly, heterotetramer of 2 Nubp1 and 2 Nubp2 chains. [4Fe-4S] cluster is required as a cofactor.

It is found in the cytoplasm. Component of the cytosolic iron-sulfur (Fe/S) protein assembly (CIA) machinery. Required for maturation of extramitochondrial Fe-S proteins. The Nubp1-Nubp2 heterotetramer forms a Fe-S scaffold complex, mediating the de novo assembly of an Fe-S cluster and its transfer to target apoproteins. The polypeptide is Cytosolic Fe-S cluster assembly factor Nubp1 homolog (Drosophila virilis (Fruit fly)).